The chain runs to 347 residues: D-alanine--D-alanine ligase (347 aa).

Residues 134-332 form the ATP-grasp domain; it reads KLYAKDLGVK…LAQSLPKTPK (199 aa). 161–216 provides a ligand contact to ATP; that stretch reads LIGFNFPFIIKPSNAGSSLGVSVVKEEKELIYALDGAFEYSKEILIEPFIQGVKEY. Aspartate 288, glutamate 300, and asparagine 302 together coordinate Mg(2+).

Belongs to the D-alanine--D-alanine ligase family. Mg(2+) is required as a cofactor. Mn(2+) serves as cofactor.

The protein resides in the cytoplasm. The catalysed reaction is 2 D-alanine + ATP = D-alanyl-D-alanine + ADP + phosphate + H(+). It functions in the pathway cell wall biogenesis; peptidoglycan biosynthesis. Functionally, cell wall formation. This chain is D-alanine--D-alanine ligase, found in Helicobacter pylori (strain Shi470).